A 692-amino-acid polypeptide reads, in one-letter code: Threonine--tRNA ligase (692 aa).

The tract at residues methionine 1–arginine 20 is disordered. The 74-residue stretch at methionine 1–alanine 74 folds into the TGS domain. Positions aspartate 269 to proline 575 are catalytic. Positions 374, 425, and 552 each coordinate Zn(2+).

It belongs to the class-II aminoacyl-tRNA synthetase family. In terms of assembly, homodimer. Zn(2+) serves as cofactor.

The protein localises to the cytoplasm. The enzyme catalyses tRNA(Thr) + L-threonine + ATP = L-threonyl-tRNA(Thr) + AMP + diphosphate + H(+). Catalyzes the attachment of threonine to tRNA(Thr) in a two-step reaction: L-threonine is first activated by ATP to form Thr-AMP and then transferred to the acceptor end of tRNA(Thr). Also edits incorrectly charged L-seryl-tRNA(Thr). The polypeptide is Threonine--tRNA ligase (Mycobacterium tuberculosis (strain CDC 1551 / Oshkosh)).